Here is a 323-residue protein sequence, read N- to C-terminus: MGSAMVLSMSLLGFLPYAVFGPAIGVLVDRHDRKKIMIGADLIIAAAGSVLTIVAFYMELPVWMVMIVLFIRSIGTAFHTPALNAVTPLLVPEEQLTKCAGYSQSLQSISYIVSPAVAALLYSVWELNAIIAIDVLGAVIASITVLIVRIPKLGDRVQSLDPNFIREMQEGMAVLRQNKGLFALLLVGTLYMFVYMPINALFPLISMDYFNGTPVHISITEISFASGMLIGGLLLGLFGNYQKRILLITASIFMMGISLTISGLLPQSGFFIFVVCSAIMGLSVPFYSGVQTALFQEKIKPEYLGRVFSLTGSIMSLAMPIGL.

Helical transmembrane passes span 6–26 (VLSM…AIGV), 51–71 (LTIV…VLFI), 105–125 (SLQS…YSVW), 128–148 (NAII…VLIV), 182–202 (FALL…NALF), 219–239 (ITEI…GLFG), 245–265 (ILLI…SGLL), 270–290 (FFIF…YSGV), and 303–323 (YLGR…PIGL).

The protein belongs to the major facilitator superfamily. Drug:H(+) antiporter-3 (DHA3) (TC 2.A.1.21) family.

Its subcellular location is the cell membrane. Functionally, confers resistance to 14-membered macrolides including erythromycin and to 15-membered macrolides but not to 16-membered macrolides, lincosamides or analogs of streptogramin B. May function as an efflux pump to regulate intracellular macrolide levels. The sequence is that of Macrolide efflux protein A (mefA) from Enterococcus faecalis (Streptococcus faecalis).